Here is a 401-residue protein sequence, read N- to C-terminus: Argininosuccinate synthase (401 aa).

ATP-binding positions include 7-15 and Ala34; that span reads AYSGGLDTS. Tyr85 and Ser90 together coordinate L-citrulline. Residue Gly115 participates in ATP binding. L-aspartate is bound by residues Thr117, Asn121, and Asp122. Asn121 serves as a coordination point for L-citrulline. 5 residues coordinate L-citrulline: Arg125, Ser174, Ser183, Glu259, and Tyr271.

The protein belongs to the argininosuccinate synthase family. Type 1 subfamily. Homotetramer.

It is found in the cytoplasm. The catalysed reaction is L-citrulline + L-aspartate + ATP = 2-(N(omega)-L-arginino)succinate + AMP + diphosphate + H(+). Its pathway is amino-acid biosynthesis; L-arginine biosynthesis; L-arginine from L-ornithine and carbamoyl phosphate: step 2/3. The chain is Argininosuccinate synthase from Desulfitobacterium hafniense (strain DSM 10664 / DCB-2).